The following is a 122-amino-acid chain: Ribosome-binding factor A (122 aa).

This sequence belongs to the RbfA family. In terms of assembly, monomer. Binds 30S ribosomal subunits, but not 50S ribosomal subunits or 70S ribosomes.

Its subcellular location is the cytoplasm. Functionally, one of several proteins that assist in the late maturation steps of the functional core of the 30S ribosomal subunit. Associates with free 30S ribosomal subunits (but not with 30S subunits that are part of 70S ribosomes or polysomes). Required for efficient processing of 16S rRNA. May interact with the 5'-terminal helix region of 16S rRNA. The polypeptide is Ribosome-binding factor A (Burkholderia thailandensis (strain ATCC 700388 / DSM 13276 / CCUG 48851 / CIP 106301 / E264)).